Consider the following 209-residue polypeptide: MEYATMSSSNSTHNFQRKIALIGARNVGKTTLTVRFVESRFVESYYPTIENEFTRIIPYKSHDCTLEILDTAGQDEVSLLNIKSLTGVRGIILCYSIINRASFDLIPILWDKLVDQLGKDNLPVILVGTKADLGRSTKGVKRCVTKAEGEKLASTIGSQDKRNQAAFIECSAELDYNVEETFMLLLKQMERVEGTLGLDAENNNKCSIM.

Residue methionine 1 is modified to N-acetylmethionine. Positions 28, 29, 30, 31, 42, 45, 48, 132, and 172 each coordinate GTP. Residue threonine 30 participates in Mg(2+) binding. Residues 45–53 carry the Effector region motif; that stretch reads YYPTIENEF. Residue threonine 48 participates in Mg(2+) binding. Position 206 is a cysteine methyl ester (cysteine 206). Residue cysteine 206 is the site of S-farnesyl cysteine attachment. A propeptide spans 207–209 (removed in mature form); it reads SIM.

The protein belongs to the small GTPase superfamily. Rheb family. In terms of assembly, interacts with BTN2.

It is found in the cell membrane. The catalysed reaction is GTP + H2O = GDP + phosphate + H(+). Its function is as follows. Binds GTP and exhibits intrinsic GTPase activity. Involved in the regulation of arginine and lysine uptake. Acts through the CAN1 permease. This is GTP-binding protein RHB1 (RHB1) from Saccharomyces cerevisiae (strain ATCC 204508 / S288c) (Baker's yeast).